A 171-amino-acid chain; its full sequence is MANPKNTASLEELKARFEQAQSTLLTEYRGLSVAETTELRRALGSDVTYSVAKNTMIKLAAREAGIELDESLLTGPTAIAFVNGEAVDAAKAMKDFGKDHKNFVIKGGYMDGATIDAAQVEAIAELDNRETTLAKLAGAMQGSLAKAAGLFNAPASQVARLAAALQEKKEQ.

Belongs to the universal ribosomal protein uL10 family. Part of the ribosomal stalk of the 50S ribosomal subunit. The N-terminus interacts with L11 and the large rRNA to form the base of the stalk. The C-terminus forms an elongated spine to which L12 dimers bind in a sequential fashion forming a multimeric L10(L12)X complex.

Functionally, forms part of the ribosomal stalk, playing a central role in the interaction of the ribosome with GTP-bound translation factors. The protein is Large ribosomal subunit protein uL10 of Corynebacterium jeikeium (strain K411).